Reading from the N-terminus, the 415-residue chain is Serine hydroxymethyltransferase (415 aa).

Residues Leu117 and 121 to 123 each bind (6S)-5,6,7,8-tetrahydrofolate; that span reads GHL. Lys225 is subject to N6-(pyridoxal phosphate)lysine. 349–351 contacts (6S)-5,6,7,8-tetrahydrofolate; sequence SPF.

This sequence belongs to the SHMT family. Homodimer. Pyridoxal 5'-phosphate serves as cofactor.

It is found in the cytoplasm. It carries out the reaction (6R)-5,10-methylene-5,6,7,8-tetrahydrofolate + glycine + H2O = (6S)-5,6,7,8-tetrahydrofolate + L-serine. Its pathway is one-carbon metabolism; tetrahydrofolate interconversion. It participates in amino-acid biosynthesis; glycine biosynthesis; glycine from L-serine: step 1/1. Catalyzes the reversible interconversion of serine and glycine with tetrahydrofolate (THF) serving as the one-carbon carrier. This reaction serves as the major source of one-carbon groups required for the biosynthesis of purines, thymidylate, methionine, and other important biomolecules. Also exhibits THF-independent aldolase activity toward beta-hydroxyamino acids, producing glycine and aldehydes, via a retro-aldol mechanism. The polypeptide is Serine hydroxymethyltransferase (Nitratiruptor sp. (strain SB155-2)).